Reading from the N-terminus, the 32-residue chain is Calichemicin antitumor antibiotic biosynthesis protein (32 aa).

This chain is Calichemicin antitumor antibiotic biosynthesis protein, found in Micromonospora echinospora (Micromonospora purpurea).